Here is a 310-residue protein sequence, read N- to C-terminus: tRNA uridine(34) hydroxylase (310 aa).

The 95-residue stretch at Ala-123–Ser-217 folds into the Rhodanese domain. Catalysis depends on Cys-177, which acts as the Cysteine persulfide intermediate.

This sequence belongs to the TrhO family.

It catalyses the reaction uridine(34) in tRNA + AH2 + O2 = 5-hydroxyuridine(34) in tRNA + A + H2O. Catalyzes oxygen-dependent 5-hydroxyuridine (ho5U) modification at position 34 in tRNAs. The chain is tRNA uridine(34) hydroxylase from Acaryochloris marina (strain MBIC 11017).